Here is a 268-residue protein sequence, read N- to C-terminus: Undecaprenyl-diphosphatase (268 aa).

7 consecutive transmembrane segments (helical) span residues 41-61, 81-101, 106-126, 146-166, 191-211, 213-233, and 245-265; these read LAYS…LIYF, WLTY…PLYM, YLLL…AVIF, MTLG…LPGI, FVLV…SEGG, VATP…LVTI, and VTLV…TRIL.

The protein belongs to the UppP family.

It localises to the cell membrane. The enzyme catalyses di-trans,octa-cis-undecaprenyl diphosphate + H2O = di-trans,octa-cis-undecaprenyl phosphate + phosphate + H(+). Functionally, catalyzes the dephosphorylation of undecaprenyl diphosphate (UPP). The chain is Undecaprenyl-diphosphatase from Pyrobaculum islandicum (strain DSM 4184 / JCM 9189 / GEO3).